The sequence spans 208 residues: Putative thymidylate kinase (208 aa).

The segment at 12–19 (GIDGTGTS) is defective ATP-binding.

The protein belongs to the thymidylate kinase family.

The catalysed reaction is dTMP + ATP = dTDP + ADP. The polypeptide is Putative thymidylate kinase (tmk) (Treponema pallidum (strain Nichols)).